A 186-amino-acid chain; its full sequence is Lipid A palmitoyltransferase PagP (186 aa).

An N-terminal signal peptide occupies residues 1-25 (MKVSKYVAIFFFVFIQLISVGKVFA). Active-site residues include H58, D101, and S102.

It belongs to the lipid A palmitoyltransferase family. In terms of assembly, homodimer.

The protein localises to the cell outer membrane. The catalysed reaction is lipid A (E. coli) + a 1-hexadecanoyl-2-acyl-sn-glycero-3-phosphocholine = hepta-acyl lipid A (E. coli) + a 2-acyl-sn-glycero-3-phosphocholine. It catalyses the reaction lipid IIA + a 1-hexadecanoyl-2-acyl-sn-glycero-3-phosphocholine = lipid IIB + a 2-acyl-sn-glycero-3-phosphocholine. It carries out the reaction lipid IVA (E. coli) + a 1-hexadecanoyl-2-acyl-sn-glycero-3-phosphocholine = lipid IVB (E. coli) + a 2-acyl-sn-glycero-3-phosphocholine. Transfers a palmitate residue from the sn-1 position of a phospholipid to the N-linked hydroxymyristate on the proximal unit of lipid A or its precursors. The chain is Lipid A palmitoyltransferase PagP from Escherichia coli O6:K15:H31 (strain 536 / UPEC).